The following is a 263-amino-acid chain: Polyglutamine-binding protein 1 (263 aa).

The WW domain maps to 46 to 80; the sequence is EGLPPSWYKVFDPSCGLPYYWNVDTDLVSWLSPHD. Residue serine 94 is modified to Phosphoserine. Residues 94–263 are disordered; it reads SSNADAEEKL…AEASRTKQQD (170 aa). Residues 99–173 are compositionally biased toward basic and acidic residues; it reads AEEKLDRSHE…DKVDREESKE (75 aa). 14 consecutive repeat copies span residues 104–110, 111–117, 118–124, 125–131, 132–138, 139–140, 141–142, 143–144, 150–151, 152–153, 154–155, 156–157, 158–159, and 160–161. Positions 104 to 138 are 5 X 7 AA approximate tandem repeats of D-R-[SG]-H-D-K-S; sequence DRSHEKSDRGHEKSDRGHEKSDRSHEKSERNHEKS. The interval 139–144 is 3 X 2 AA tandem repeats of [DE]-R; sequence DRDRER. The tract at residues 150-161 is 6 X 2 AA tandem repeats of [DE]-R; that stretch reads DRERERDRDRDR. An important for interaction with TXNL4A region spans residues 243–253; sequence YPSPGAVLRAN. Serine 245 carries the post-translational modification Phosphoserine.

In terms of assembly, interacts with POU3F2/Brn-2, ATXN1, TXNL4A, HTT and AR. Interaction with ATXN1 correlates positively with the length of the polyglutamine tract. Interacts with RNA polymerase II large subunit in a phosphorylation-dependent manner. Forms a ternary complex with ATXN1 mutant and phosphorylated RNA polymerase II. Interacts (via C-terminus) with TXNL4A and CD2BP2. Interacts (via WW domain) with ATN1 and SF3B1, and may interact with additional splice factors. Interacts (via WW domain) with WBP11; Leading to reduce interaction between PQBP1 and TXNL4A. Interacts with CAPRIN1. Interacts with DDX1. Interacts with SFPQ. Interacts with KHSRP.

Its subcellular location is the nucleus. The protein localises to the nucleus speckle. It is found in the cytoplasmic granule. Intrinsically disordered protein that acts as a scaffold, and which is involved in different processes, such as pre-mRNA splicing, transcription regulation, innate immunity and neuron development. Interacts with splicing-related factors via the intrinsically disordered region and regulates alternative splicing of target pre-mRNA species. May suppress the ability of POU3F2 to transactivate the DRD1 gene in a POU3F2 dependent manner. Can activate transcription directly or via association with the transcription machinery. May be involved in ATXN1 mutant-induced cell death. The interaction with ATXN1 mutant reduces levels of phosphorylated RNA polymerase II large subunit. Involved in the assembly of cytoplasmic stress granule, possibly by participating in the transport of neuronal RNA granules. Also acts as an innate immune sensor of infection by retroviruses, by detecting the presence of reverse-transcribed DNA in the cytosol. Directly binds retroviral reverse-transcribed DNA in the cytosol and interacts with CGAS, leading to activate the cGAS-STING signaling pathway, triggering type-I interferon production. This is Polyglutamine-binding protein 1 (PQBP1) from Bos taurus (Bovine).